Consider the following 232-residue polypeptide: Small ribosomal subunit protein uS2 (232 aa).

The protein belongs to the universal ribosomal protein uS2 family.

This is Small ribosomal subunit protein uS2 from Alkaliphilus oremlandii (strain OhILAs) (Clostridium oremlandii (strain OhILAs)).